Consider the following 508-residue polypeptide: Photosystem II CP47 reaction center protein (508 aa).

Helical transmembrane passes span 21-36, 101-115, 140-156, 203-218, 237-252, and 457-472; these read SVHIMHTALVAGWAGS, IVLSGLCFLAAIWHW, GIHLFLSGVACFGFGAF, IAAGTLGILAGLFHLS, VLSSSIAAVFFAAFVV, and SFALLFFFGHIWHGAR.

The protein belongs to the PsbB/PsbC family. PsbB subfamily. PSII is composed of 1 copy each of membrane proteins PsbA, PsbB, PsbC, PsbD, PsbE, PsbF, PsbH, PsbI, PsbJ, PsbK, PsbL, PsbM, PsbT, PsbX, PsbY, PsbZ, Psb30/Ycf12, at least 3 peripheral proteins of the oxygen-evolving complex and a large number of cofactors. It forms dimeric complexes. Requires Binds multiple chlorophylls. PSII binds additional chlorophylls, carotenoids and specific lipids. as cofactor.

It is found in the plastid. The protein localises to the chloroplast thylakoid membrane. Its function is as follows. One of the components of the core complex of photosystem II (PSII). It binds chlorophyll and helps catalyze the primary light-induced photochemical processes of PSII. PSII is a light-driven water:plastoquinone oxidoreductase, using light energy to abstract electrons from H(2)O, generating O(2) and a proton gradient subsequently used for ATP formation. This chain is Photosystem II CP47 reaction center protein, found in Pelargonium hortorum (Common geranium).